The chain runs to 374 residues: LRR repeats and ubiquitin-like domain-containing protein At2g30105 (374 aa).

One can recognise a Ubiquitin-like domain in the interval 13 to 87; the sequence is IKLTVKFGGK…LMLMASQGLH (75 aa). LRR repeat units lie at residues 128-151, 152-175, 177-200, 201-224, 225-248, 250-270, 272-293, 294-316, and 318-340; these read WKAT…VWDC, GSGV…ISSF, SMQK…GIAS, LKRL…MGSL, TSLR…GLLT, LEIL…IGNC, FLME…FTKL, RNLK…LFKM, and LQLS…QFEG.

The polypeptide is LRR repeats and ubiquitin-like domain-containing protein At2g30105 (Arabidopsis thaliana (Mouse-ear cress)).